We begin with the raw amino-acid sequence, 205 residues long: Peptidyl-tRNA hydrolase (205 aa).

A tRNA-binding site is contributed by Tyr18. Catalysis depends on His23, which acts as the Proton acceptor. TRNA is bound by residues Tyr69, Asn71, and Asn117.

The protein belongs to the PTH family. In terms of assembly, monomer.

Its subcellular location is the cytoplasm. It catalyses the reaction an N-acyl-L-alpha-aminoacyl-tRNA + H2O = an N-acyl-L-amino acid + a tRNA + H(+). In terms of biological role, hydrolyzes ribosome-free peptidyl-tRNAs (with 1 or more amino acids incorporated), which drop off the ribosome during protein synthesis, or as a result of ribosome stalling. Catalyzes the release of premature peptidyl moieties from peptidyl-tRNA molecules trapped in stalled 50S ribosomal subunits, and thus maintains levels of free tRNAs and 50S ribosomes. The polypeptide is Peptidyl-tRNA hydrolase (Thermosynechococcus vestitus (strain NIES-2133 / IAM M-273 / BP-1)).